The primary structure comprises 282 residues: Shikimate dehydrogenase (NADP(+)) (282 aa).

Residues 15-17 (SKS) and T62 contribute to the shikimate site. The active-site Proton acceptor is K66. Shikimate contacts are provided by N87 and D103. NADP(+) is bound by residues 127–131 (GAGGA), 151–156 (NRTHTK), and M220. A shikimate-binding site is contributed by Y222. G244 lines the NADP(+) pocket.

This sequence belongs to the shikimate dehydrogenase family. Homodimer.

The catalysed reaction is shikimate + NADP(+) = 3-dehydroshikimate + NADPH + H(+). It functions in the pathway metabolic intermediate biosynthesis; chorismate biosynthesis; chorismate from D-erythrose 4-phosphate and phosphoenolpyruvate: step 4/7. Involved in the biosynthesis of the chorismate, which leads to the biosynthesis of aromatic amino acids. Catalyzes the reversible NADPH linked reduction of 3-dehydroshikimate (DHSA) to yield shikimate (SA). The sequence is that of Shikimate dehydrogenase (NADP(+)) from Shewanella baltica (strain OS195).